The following is a 190-amino-acid chain: UPF0200 protein OE_4442F (190 aa).

ATP is bound at residue 8–15 (GMPGSGKS). The disordered stretch occupies residues 120–144 (ARIEDRDRPGDTDGEPLDAREDRER).

The protein belongs to the UPF0200 family.

This chain is UPF0200 protein OE_4442F, found in Halobacterium salinarum (strain ATCC 29341 / DSM 671 / R1).